Reading from the N-terminus, the 556-residue chain is Glucose-6-phosphate isomerase (556 aa).

E364 serves as the catalytic Proton donor. Residues H395 and K521 contribute to the active site.

Belongs to the GPI family.

It localises to the cytoplasm. It catalyses the reaction alpha-D-glucose 6-phosphate = beta-D-fructose 6-phosphate. It participates in carbohydrate biosynthesis; gluconeogenesis. Its pathway is carbohydrate degradation; glycolysis; D-glyceraldehyde 3-phosphate and glycerone phosphate from D-glucose: step 2/4. Functionally, catalyzes the reversible isomerization of glucose-6-phosphate to fructose-6-phosphate. The chain is Glucose-6-phosphate isomerase from Corynebacterium kroppenstedtii (strain DSM 44385 / JCM 11950 / CIP 105744 / CCUG 35717).